The sequence spans 427 residues: Protein TIFY 6a (427 aa).

The segment covering 1 to 25 (MERDFLGAIWRKEEAAGKPEEHSDY) has biased composition (basic and acidic residues). Disordered stretches follow at residues 1 to 32 (MERD…GGGA) and 128 to 154 (YGVA…HANP). Over residues 136 to 146 (FPSPSPSPRHP) the composition is skewed to pro residues. The Tify domain maps to 196 to 231 (QNPKVTQMTIFYDGLVNVFDNIPVEKAQELMLLASR). Residues 296–327 (SFSSSNDSAGPKSGGLPLAVTPLSQASPSQPI) are disordered. Residues 317-327 (PLSQASPSQPI) show a composition bias toward polar residues. The Jas signature appears at 343–367 (PQARKASLARFLEKRKERVSSVAPY). The short motif at 345 to 352 (ARKASLAR) is the Nuclear localization signal element. The segment at 361–427 (VSSVAPYPSS…QEPPSTKLQI (67 aa)) is disordered. Composition is skewed to polar residues over residues 369 to 402 (SSKS…NNCE) and 411 to 427 (RNIS…KLQI).

It belongs to the TIFY/JAZ family. In terms of assembly, interacts with COI1A. Interacts with COI1A and COI1B in a coronatine-dependent manner. Coronatine is an analog of jasmonoyl isoleucine (JA-Ile). Ubiquitinated. Targeted for degradation by the SCF(COI1) E3 ubiquitin ligase-proteasome pathway during jasmonate signaling.

Its subcellular location is the nucleus. Its function is as follows. Repressor of jasmonate responses. This chain is Protein TIFY 6a, found in Oryza sativa subsp. japonica (Rice).